Here is a 423-residue protein sequence, read N- to C-terminus: Gamma-glutamyl phosphate reductase (423 aa).

Belongs to the gamma-glutamyl phosphate reductase family.

It is found in the cytoplasm. The catalysed reaction is L-glutamate 5-semialdehyde + phosphate + NADP(+) = L-glutamyl 5-phosphate + NADPH + H(+). It participates in amino-acid biosynthesis; L-proline biosynthesis; L-glutamate 5-semialdehyde from L-glutamate: step 2/2. Catalyzes the NADPH-dependent reduction of L-glutamate 5-phosphate into L-glutamate 5-semialdehyde and phosphate. The product spontaneously undergoes cyclization to form 1-pyrroline-5-carboxylate. The chain is Gamma-glutamyl phosphate reductase from Burkholderia ambifaria (strain ATCC BAA-244 / DSM 16087 / CCUG 44356 / LMG 19182 / AMMD) (Burkholderia cepacia (strain AMMD)).